The chain runs to 2220 residues: Calcineurin-binding protein cabin-1 (2220 aa).

Ser-10 and Ser-11 each carry phosphoserine. Thr-12 carries the phosphothreonine modification. 2 positions are modified to phosphoserine: Ser-20 and Ser-66. TPR repeat units lie at residues 36-69 (AFALYHKALDLQKHDRFEESAKAYHELLEASLLR), 90-123 (YSTYKNLAQLAAQREDLETAMEFYLEAVMLDSTD), and 125-157 (NLWYKIGHVALRLIRIPLARHAFEEGLRCNPDH). The interval 361–400 (GAPVGDISGGDKSKKGVKRKKISEESGETAKRRSARVRNT) is disordered. Over residues 382–391 (ISEESGETAK) the composition is skewed to basic and acidic residues. Ser-433 and Ser-450 each carry phosphoserine. The stretch at 615–648 (VRVYWLKARFLALQGDMEQALENYDICTEMLQSS) is one TPR 4 repeat. The residue at position 673 (Ser-673) is a Phosphoserine. TPR repeat units lie at residues 1055-1088 (NELYYLLADYHFKNKEQSKAIKFYMHDICICPNR) and 1106-1139 (KLNSNELKSDGPIWKHATPVLNCFRRALEIDSSN). Disordered stretches follow at residues 1299 to 1476 (FARG…STPT), 1668 to 1845 (AEGS…RLSR), 1916 to 2165 (AQRQ…GSIS), and 2197 to 2220 (VLETSSQESSLESETDEDDDYMDI). Positions 1301–1324 (RGEEKNTPKASEKEKACLVDEDSH) are enriched in basic and acidic residues. The segment covering 1327–1349 (AGTLPGPGASLPSSSGPGLTSPP) has biased composition (low complexity). Residues 1377–1397 (DSTAVALSDSSSTQDFFNEPT) are compositionally biased toward polar residues. The span at 1402–1412 (GSRKSYTEKRL) shows a compositional bias: basic and acidic residues. Position 1439 is a phosphoserine (Ser-1439). Residues 1715-1725 (SGPGPEPGGKV) show a composition bias toward gly residues. Basic and acidic residues-rich tracts occupy residues 1744–1753 (SGERKDKESP) and 1784–1794 (PARDRGPESRP). Pro residues predominate over residues 1812–1823 (PLTPAQPAPAPA). 2 stretches are compositionally biased toward polar residues: residues 1918-1927 (RQASGDTPTT) and 1975-1989 (TIITCPPSASASTLD). A Phosphothreonine modification is found at Thr-1924. Positions 2070–2081 (GKLRPEPRRDGE) are enriched in basic and acidic residues. A compositionally biased stretch (low complexity) spans 2091–2112 (PLSSPPTAASSKAPSSGSAQPP). Position 2094 is a phosphoserine (Ser-2094). Residues 2116–2153 (PGKPEPSRAKSRPLPNMPKLVIPSAATKFPPEITVTPP) are required for interaction with calcineurin. Phosphothreonine occurs at positions 2151 and 2154. Positions 2207–2220 (LESETDEDDDYMDI) are enriched in acidic residues.

As to quaternary structure, component of a complex that includes at least ASF1A, CABIN1, HIRA, histone H3.3 and UBN1. Interacts with calcineurin. Interacts with MEF2B. Activated through PKC-mediated hyperphosphorylation. Phosphorylation by the DNA damage kinases ATM and CHK2 enhances ubiquitination. Post-translationally, upon genotoxic stress, ubiquitination by the DCX(DDB2) E3 ubiquitin-protein ligase complex targets CABIN1 for proteasomal degradation, leading to the release of p53/TP53. As to expression, widely expressed in different tissues.

Its subcellular location is the nucleus. In terms of biological role, may be required for replication-independent chromatin assembly. May serve as a negative regulator of T-cell receptor (TCR) signaling via inhibition of calcineurin. Inhibition of activated calcineurin is dependent on both PKC and calcium signals. Acts as a negative regulator of p53/TP53 by keeping p53 in an inactive state on chromatin at promoters of a subset of it's target genes. In Homo sapiens (Human), this protein is Calcineurin-binding protein cabin-1 (CABIN1).